Reading from the N-terminus, the 745-residue chain is Inhibitor of nuclear factor kappa-B kinase subunit alpha (745 aa).

Residues W15–C300 form the Protein kinase domain. ATP contacts are provided by residues L21–V29 and K44. Position 23 is a phosphothreonine; by PKB/AKT1 and SGK1 (T23). D144 (proton acceptor) is an active-site residue. A Phosphoserine; by MAP3K14 modification is found at S176. The residue at position 180 (S180) is a Phosphoserine; by SGK1. The segment at L455–L476 is leucine-zipper. The interval L738–L743 is NEMO-binding.

Belongs to the protein kinase superfamily. Ser/Thr protein kinase family. I-kappa-B kinase subfamily. Component of the I-kappa-B-kinase (IKK) core complex consisting of CHUK, IKBKB and IKBKG; probably four alpha/CHUK-beta/IKBKB dimers are associated with four gamma/IKBKG subunits. The IKK core complex seems to associate with regulatory or adapter proteins to form a IKK-signalosome holo-complex. The IKK complex associates with TERF2IP/RAP1, leading to promote IKK-mediated phosphorylation of RELA/p65. Part of a complex composed of NCOA2, NCOA3, CHUK/IKKA, IKBKB, IKBKG and CREBBP. Part of a 70-90 kDa complex at least consisting of CHUK/IKKA, IKBKB, NFKBIA, RELA, ELP1 and MAP3K14. Directly interacts with TRPC4AP. May interact with TRAF2. Interacts with NALP2. May interact with MAVS/IPS1. Interacts with ARRB1 and ARRB2. Interacts with NLRC5; prevents CHUK phosphorylation and kinase activity. Interacts with PIAS1; this interaction induces PIAS1 phosphorylation. Interacts with ZNF268 isoform 2; the interaction is further increased in a TNF-alpha-dependent manner. Interacts with LRRC14. Interacts with SASH1. Directly interacts with DDX3X after the physiological activation of the TLR7 and TLR8 pathways; this interaction enhances CHUK autophosphorylation. In terms of processing, ubiquitinated by TRIM56 via 'Lys-63'-linked ubiquitination, promoting activation of CHUK/IKKA. Post-translationally, phosphorylated by MAP3K14/NIK, AKT and to a lesser extent by MEKK1, and dephosphorylated by PP2A. Autophosphorylated. As to expression, ubiquitous only for isoform 1, isoforms 2 and 3 are expressed predominantly in brain and T-lymphocytes.

The protein localises to the cytoplasm. Its subcellular location is the nucleus. The catalysed reaction is L-seryl-[I-kappa-B protein] + ATP = O-phospho-L-seryl-[I-kappa-B protein] + ADP + H(+). Activated when phosphorylated and inactivated when dephosphorylated. Functionally, serine kinase that plays an essential role in the NF-kappa-B signaling pathway which is activated by multiple stimuli such as inflammatory cytokines, bacterial or viral products, DNA damages or other cellular stresses. Acts as a part of the canonical IKK complex in the conventional pathway of NF-kappa-B activation and phosphorylates inhibitors of NF-kappa-B on serine residues. These modifications allow polyubiquitination of the inhibitors and subsequent degradation by the proteasome. In turn, free NF-kappa-B is translocated into the nucleus and activates the transcription of hundreds of genes involved in immune response, growth control, or protection against apoptosis. Negatively regulates the pathway by phosphorylating the scaffold protein TAXBP1 and thus promoting the assembly of the A20/TNFAIP3 ubiquitin-editing complex (composed of A20/TNFAIP3, TAX1BP1, and the E3 ligases ITCH and RNF11). Therefore, CHUK plays a key role in the negative feedback of NF-kappa-B canonical signaling to limit inflammatory gene activation. As part of the non-canonical pathway of NF-kappa-B activation, the MAP3K14-activated CHUK/IKKA homodimer phosphorylates NFKB2/p100 associated with RelB, inducing its proteolytic processing to NFKB2/p52 and the formation of NF-kappa-B RelB-p52 complexes. In turn, these complexes regulate genes encoding molecules involved in B-cell survival and lymphoid organogenesis. Also participates in the negative feedback of the non-canonical NF-kappa-B signaling pathway by phosphorylating and destabilizing MAP3K14/NIK. Within the nucleus, phosphorylates CREBBP and consequently increases both its transcriptional and histone acetyltransferase activities. Modulates chromatin accessibility at NF-kappa-B-responsive promoters by phosphorylating histones H3 at 'Ser-10' that are subsequently acetylated at 'Lys-14' by CREBBP. Additionally, phosphorylates the CREBBP-interacting protein NCOA3. Also phosphorylates FOXO3 and may regulate this pro-apoptotic transcription factor. Phosphorylates RIPK1 at 'Ser-25' which represses its kinase activity and consequently prevents TNF-mediated RIPK1-dependent cell death. Phosphorylates AMBRA1 following mitophagy induction, promoting AMBRA1 interaction with ATG8 family proteins and its mitophagic activity. The sequence is that of Inhibitor of nuclear factor kappa-B kinase subunit alpha (Chuk) from Mus musculus (Mouse).